Reading from the N-terminus, the 230-residue chain is MAHPSQLGFQDAASPVMEELLHFHDHALMIVLLISTLVLYIIVAMVSTKLTNMYILDSQEIEIVWTVLPAVILILIALPSLRILYLMDEINDPHLTIKAMGHQWYWSYEYTDYEDLGFDSYMVPTQDLVPGQFRLLETDHRMVVPVESPIRVLVSAEDVLHSWAVPSLGVKMDAVPGRLNQTAFIASRPGVFYGQCSEICGANHSFMPIVVEAVPLEHFEKWSTMMLEDA.

At 1–14 the chain is on the mitochondrial intermembrane side; the sequence is MAHPSQLGFQDAAS. Residues 15 to 45 form a helical membrane-spanning segment; that stretch reads PVMEELLHFHDHALMIVLLISTLVLYIIVAM. At 46 to 59 the chain is on the mitochondrial matrix side; it reads VSTKLTNMYILDSQ. Residues 60 to 87 form a helical membrane-spanning segment; that stretch reads EIEIVWTVLPAVILILIALPSLRILYLM. Topologically, residues 88–230 are mitochondrial intermembrane; that stretch reads DEINDPHLTI…KWSTMMLEDA (143 aa). Residues H161, C196, E198, C200, H204, and M207 each coordinate Cu cation. E198 serves as a coordination point for Mg(2+).

This sequence belongs to the cytochrome c oxidase subunit 2 family. In terms of assembly, component of the cytochrome c oxidase (complex IV, CIV), a multisubunit enzyme composed of 14 subunits. The complex is composed of a catalytic core of 3 subunits MT-CO1, MT-CO2 and MT-CO3, encoded in the mitochondrial DNA, and 11 supernumerary subunits COX4I, COX5A, COX5B, COX6A, COX6B, COX6C, COX7A, COX7B, COX7C, COX8 and NDUFA4, which are encoded in the nuclear genome. The complex exists as a monomer or a dimer and forms supercomplexes (SCs) in the inner mitochondrial membrane with NADH-ubiquinone oxidoreductase (complex I, CI) and ubiquinol-cytochrome c oxidoreductase (cytochrome b-c1 complex, complex III, CIII), resulting in different assemblies (supercomplex SCI(1)III(2)IV(1) and megacomplex MCI(2)III(2)IV(2)). Found in a complex with TMEM177, COA6, COX18, COX20, SCO1 and SCO2. Interacts with TMEM177 in a COX20-dependent manner. Interacts with COX20. Interacts with COX16. Requires Cu cation as cofactor.

It is found in the mitochondrion inner membrane. It catalyses the reaction 4 Fe(II)-[cytochrome c] + O2 + 8 H(+)(in) = 4 Fe(III)-[cytochrome c] + 2 H2O + 4 H(+)(out). Functionally, component of the cytochrome c oxidase, the last enzyme in the mitochondrial electron transport chain which drives oxidative phosphorylation. The respiratory chain contains 3 multisubunit complexes succinate dehydrogenase (complex II, CII), ubiquinol-cytochrome c oxidoreductase (cytochrome b-c1 complex, complex III, CIII) and cytochrome c oxidase (complex IV, CIV), that cooperate to transfer electrons derived from NADH and succinate to molecular oxygen, creating an electrochemical gradient over the inner membrane that drives transmembrane transport and the ATP synthase. Cytochrome c oxidase is the component of the respiratory chain that catalyzes the reduction of oxygen to water. Electrons originating from reduced cytochrome c in the intermembrane space (IMS) are transferred via the dinuclear copper A center (CU(A)) of subunit 2 and heme A of subunit 1 to the active site in subunit 1, a binuclear center (BNC) formed by heme A3 and copper B (CU(B)). The BNC reduces molecular oxygen to 2 water molecules using 4 electrons from cytochrome c in the IMS and 4 protons from the mitochondrial matrix. This Oncorhynchus mykiss (Rainbow trout) protein is Cytochrome c oxidase subunit 2 (mt-co2).